The chain runs to 400 residues: tRNA(Met) cytidine acetate ligase (400 aa).

Residues 7–20 (ITEY…HIYH), Gly102, Asn165, and Arg190 contribute to the ATP site.

This sequence belongs to the TmcAL family.

The protein resides in the cytoplasm. It catalyses the reaction cytidine(34) in elongator tRNA(Met) + acetate + ATP = N(4)-acetylcytidine(34) in elongator tRNA(Met) + AMP + diphosphate. Functionally, catalyzes the formation of N(4)-acetylcytidine (ac(4)C) at the wobble position of elongator tRNA(Met), using acetate and ATP as substrates. First activates an acetate ion to form acetyladenylate (Ac-AMP) and then transfers the acetyl group to tRNA to form ac(4)C34. The sequence is that of tRNA(Met) cytidine acetate ligase from Clostridium novyi (strain NT).